A 387-amino-acid chain; its full sequence is Protein RecA, chromosomal (387 aa).

80–87 (GPESSGKT) is a binding site for ATP. The interval 352–387 (EVAETTEDTSTKAKATKAKKEEKVVETEEIELELED) is disordered. Acidic residues predominate over residues 378–387 (TEEIELELED).

Belongs to the RecA family.

Its subcellular location is the cytoplasm. Can catalyze the hydrolysis of ATP in the presence of single-stranded DNA, the ATP-dependent uptake of single-stranded DNA by duplex DNA, and the ATP-dependent hybridization of homologous single-stranded DNAs. It interacts with LexA causing its activation and leading to its autocatalytic cleavage. In Lactococcus lactis subsp. lactis (strain IL1403) (Streptococcus lactis), this protein is Protein RecA, chromosomal.